Reading from the N-terminus, the 101-residue chain is Urease subunit beta (101 aa).

This sequence belongs to the urease beta subunit family. Heterotrimer of UreA (gamma), UreB (beta) and UreC (alpha) subunits. Three heterotrimers associate to form the active enzyme.

It localises to the cytoplasm. The catalysed reaction is urea + 2 H2O + H(+) = hydrogencarbonate + 2 NH4(+). The protein operates within nitrogen metabolism; urea degradation; CO(2) and NH(3) from urea (urease route): step 1/1. This chain is Urease subunit beta, found in Actinobacillus pleuropneumoniae serotype 7 (strain AP76).